The primary structure comprises 256 residues: Type III pantothenate kinase (256 aa).

6-13 (DVGNSNIV) serves as a coordination point for ATP. Substrate is bound by residues Tyr-100 and 107 to 110 (GADR). Catalysis depends on Asp-109, which acts as the Proton acceptor. Asp-129 provides a ligand contact to K(+). Thr-132 provides a ligand contact to ATP. Residue Thr-184 coordinates substrate.

This sequence belongs to the type III pantothenate kinase family. Homodimer. Requires NH4(+) as cofactor. The cofactor is K(+).

It is found in the cytoplasm. It catalyses the reaction (R)-pantothenate + ATP = (R)-4'-phosphopantothenate + ADP + H(+). It functions in the pathway cofactor biosynthesis; coenzyme A biosynthesis; CoA from (R)-pantothenate: step 1/5. In terms of biological role, catalyzes the phosphorylation of pantothenate (Pan), the first step in CoA biosynthesis. This chain is Type III pantothenate kinase, found in Geotalea uraniireducens (strain Rf4) (Geobacter uraniireducens).